The sequence spans 363 residues: Chalcone synthase B (363 aa).

The active site involves Cys170.

It belongs to the thiolase-like superfamily. Chalcone/stilbene synthases family.

The enzyme catalyses (E)-4-coumaroyl-CoA + 3 malonyl-CoA + 3 H(+) = 2',4,4',6'-tetrahydroxychalcone + 3 CO2 + 4 CoA. It participates in secondary metabolite biosynthesis; flavonoid biosynthesis. Functionally, the primary product of this enzyme is 4,2',4',6'-tetrahydroxychalcone (also termed naringenin-chalcone or chalcone) which can under specific conditions spontaneously isomerize into naringenin. This Ipomoea cordatotriloba (Tievine) protein is Chalcone synthase B (CHSB).